A 212-amino-acid polypeptide reads, in one-letter code: Golgi SNAP receptor complex member 2 (212 aa).

Residue M1 is modified to N-acetylmethionine. The Cytoplasmic segment spans residues 1 to 190 (MEPLYQQTHK…LIEKRAFQDK (190 aa)). Residues 61-107 (NRRQNAKLRVDQLKYDVQHLQTALRNFQHRRQAKEQQERQRDELLSR) are a coiled coil. The IxM motif; signal for cargo packaging into COPII-coated vesicles signature appears at 118–120 (IPM). A helical; Anchor for type IV membrane protein membrane pass occupies residues 191–211 (YFMIGGMLLTCAVMFLVVQYL). Residue T212 is a topological domain, vesicular.

Belongs to the GOSR2 family. In terms of assembly, part of a unique SNARE complex composed of the Golgi SNAREs GOSR1, STX5 and YKT6. Interacts with BET1.

Its subcellular location is the golgi apparatus. It is found in the cis-Golgi network membrane. The protein resides in the golgi apparatus membrane. It localises to the endoplasmic reticulum membrane. Functionally, involved in transport of proteins from the cis/medial-Golgi to the trans-Golgi network. This is Golgi SNAP receptor complex member 2 (Gosr2) from Rattus norvegicus (Rat).